Consider the following 389-residue polypeptide: Cellobiose 2-epimerase (389 aa).

Belongs to the cellobiose 2-epimerase family.

It is found in the cytoplasm. The enzyme catalyses D-cellobiose = beta-D-glucosyl-(1-&gt;4)-D-mannopyranose. Enhanced by Mg(2+) and Ca(2+) ions, ethylenediaminetetraacetic acid, ethylene glycol tetraacetic acid and citrate. Inhibited by Al(3+), Fe(3+), Co(2+), Cu(2+), Zn(2+), Pb(2+) and Ag(+) ions, iodoacetate, 4-chloromercuribenzoate and N-bromosuccinimide. Its function is as follows. Catalyzes the reversible epimerization of cellobiose to 4-O-beta-D-glucopyranosyl-D-mannose (Glc-Man). Can also epimerize cellotriose to Glc-Glc-Man, cellotetraose to Glc-Glc-Glc-Man, and lactose to epilactose. The chain is Cellobiose 2-epimerase (ce-ne1) from Ruminococcus albus.